A 251-amino-acid polypeptide reads, in one-letter code: Dehydration-responsive element-binding protein 1I (251 aa).

Positions 1–50 (MCTSKLEEITGEWPPPALQAASTTSSSEPCRRLSPPSSKRPAGRTKFHET) are disordered. Residues 54–114 (VFRGVRRRGR…GRAAACLNFA (61 aa)) constitute a DNA-binding region (AP2/ERF). Residues 169–198 (ATSEPSAASDDDAVTSSSSTTDADEEASPF) form a disordered region.

Belongs to the AP2/ERF transcription factor family. ERF subfamily.

It is found in the nucleus. Functionally, transcriptional activator that binds specifically to the DNA sequence 5'-[AG]CCGAC-3'. Binding to the C-repeat/DRE element mediates high salinity- and dehydration-inducible transcription. The polypeptide is Dehydration-responsive element-binding protein 1I (DREB1I) (Oryza sativa subsp. japonica (Rice)).